A 241-amino-acid chain; its full sequence is Ribonuclease PH (241 aa).

Phosphate-binding positions include arginine 90 and 128–130; that span reads GTR.

The protein belongs to the RNase PH family. As to quaternary structure, homohexameric ring arranged as a trimer of dimers.

The enzyme catalyses tRNA(n+1) + phosphate = tRNA(n) + a ribonucleoside 5'-diphosphate. Phosphorolytic 3'-5' exoribonuclease that plays an important role in tRNA 3'-end maturation. Removes nucleotide residues following the 3'-CCA terminus of tRNAs; can also add nucleotides to the ends of RNA molecules by using nucleoside diphosphates as substrates, but this may not be physiologically important. Probably plays a role in initiation of 16S rRNA degradation (leading to ribosome degradation) during starvation. The protein is Ribonuclease PH of Corynebacterium diphtheriae (strain ATCC 700971 / NCTC 13129 / Biotype gravis).